Here is a 915-residue protein sequence, read N- to C-terminus: p53-induced death domain-containing protein 1 (915 aa).

N-acetylalanine is present on Ala2. LRR repeat units follow at residues 131 to 152 (CLAH…VPEL), 154 to 176 (GLDA…GALP), 177 to 199 (ALTF…GSLS), 200 to 221 (TLQR…IGNL), 223 to 245 (SLSE…AGLR), 246 to 268 (SLRL…VHLP), and 269 to 290 (LITR…LLDA). Residue Ser304 is modified to Phosphoserine. 2 consecutive ZU5 domains span residues 327–459 (DLDS…VLRP) and 460–601 (VSNT…WYTT). Peptidase S68 regions lie at residues 428–457 (DLET…LVVL) and 571–599 (DITT…WLWY). Residues His449, Ser451, His591, and Ser593 contribute to the active site. Residues 585–721 (ARFQVTHFSW…TTALDREAQD (137 aa)) are UPA domain. A Death domain is found at 793–878 (TQSNLLSVAS…DVAEEVRAIL (86 aa)). The interval 888–915 (SIRRTGLAPEDSTLPGTSASQTPESAQA) is disordered. The span at 901 to 915 (LPGTSASQTPESAQA) shows a compositional bias: polar residues.

Forms a complex named the PIDDosome with CASP2 and CRADD. Forms a complex with IKBKG and RIPK1. Interacts with FADD and MADD. In terms of processing, undergoes autoproteolytic processing whose extent either directs cells towards survival or apoptotic pathways. Autoproteolytically cleaved into two main fragments PIDD-N and PIDD-C. PIDD-C can be further processed into PIDD-CC, a processing which is enhanced by DNA damage. The cleavage producing PIDD-C is required for translocation of PIDD1 to the nucleus upon DNA damage and activation of NF-kappa-B. PIDD-CC mediates the interaction with CRADD and the cleavage producing PIDD-CC is required for the activation of CASP2. PIDD-N remains associated with PIDD-C and PIDD-CC after cleavage. Ubiquitous.

It localises to the cytoplasm. Its subcellular location is the nucleus. In terms of biological role, component of the DNA damage/stress response pathway that functions downstream of p53/TP53 and can either promote cell survival or apoptosis. Associated with CRADD and the CASP2 caspase, it forms the PIDDosome a complex that activates CASP2 and triggers apoptosis. Associated with IKBKG and RIPK1, it enhances sumoylation and ubiquitination of IKBKG which is important for activation of the transcription factor NF-kappa-B. The chain is p53-induced death domain-containing protein 1 from Mus musculus (Mouse).